The sequence spans 491 residues: Galactose-1-phosphate uridylyltransferase (491 aa).

It belongs to the galactose-1-phosphate uridylyltransferase type 2 family.

The protein localises to the cytoplasm. The enzyme catalyses alpha-D-galactose 1-phosphate + UDP-alpha-D-glucose = alpha-D-glucose 1-phosphate + UDP-alpha-D-galactose. It functions in the pathway carbohydrate metabolism; galactose metabolism. The protein is Galactose-1-phosphate uridylyltransferase (galT) of Streptococcus mutans serotype c (strain ATCC 700610 / UA159).